We begin with the raw amino-acid sequence, 69 residues long: DNA-directed RNA polymerase subunit omega (69 aa).

The protein belongs to the RNA polymerase subunit omega family. In terms of assembly, the RNAP catalytic core consists of 2 alpha, 1 beta, 1 beta' and 1 omega subunit. When a sigma factor is associated with the core the holoenzyme is formed, which can initiate transcription.

The catalysed reaction is RNA(n) + a ribonucleoside 5'-triphosphate = RNA(n+1) + diphosphate. In terms of biological role, promotes RNA polymerase assembly. Latches the N- and C-terminal regions of the beta' subunit thereby facilitating its interaction with the beta and alpha subunits. This chain is DNA-directed RNA polymerase subunit omega, found in Exiguobacterium sp. (strain ATCC BAA-1283 / AT1b).